The sequence spans 608 residues: uncharacterized protein (608 aa).

An N-terminal signal peptide occupies residues 1–38 (MWLQQRLKVFPGLLSSSWARRVLAVSGFLVIIYWYIFS). At 39–563 (GSLFRSFWYA…EEHMAKQYRG (525 aa)) the chain is on the extracellular side. An N-linked (GlcNAc...) asparagine glycan is attached at asparagine 337. A helical membrane pass occupies residues 564-584 (LPFLFWFSVASLITLFHLFLF). Residues 585–608 (KLIYNEYCGPGAKPLFRSKEDTSV) lie on the Cytoplasmic side of the membrane.

The protein localises to the membrane. This is an uncharacterized protein from Xenopus tropicalis (Western clawed frog).